We begin with the raw amino-acid sequence, 689 residues long: Glycine--tRNA ligase beta subunit (689 aa).

The protein belongs to the class-II aminoacyl-tRNA synthetase family. In terms of assembly, tetramer of two alpha and two beta subunits.

The protein localises to the cytoplasm. The enzyme catalyses tRNA(Gly) + glycine + ATP = glycyl-tRNA(Gly) + AMP + diphosphate. The polypeptide is Glycine--tRNA ligase beta subunit (Pseudoalteromonas translucida (strain TAC 125)).